The following is a 304-amino-acid chain: Proline dehydrogenase 2 (304 aa).

Lysine 97 provides a ligand contact to substrate. Aspartate 131 is a catalytic residue. FAD contacts are provided by methionine 132 and glutamine 160. Arginine 181 is a catalytic residue. FAD contacts are provided by residues lysine 184–alanine 186 and threonine 223–histidine 224. Arginine 285–arginine 286 contributes to the substrate binding site.

The protein belongs to the proline dehydrogenase family. FAD is required as a cofactor.

The enzyme catalyses L-proline + a quinone = (S)-1-pyrroline-5-carboxylate + a quinol + H(+). Its pathway is amino-acid degradation; L-proline degradation into L-glutamate; L-glutamate from L-proline: step 1/2. Functionally, converts proline to delta-1-pyrroline-5-carboxylate. The protein is Proline dehydrogenase 2 of Bacillus subtilis subsp. natto.